A 372-amino-acid chain; its full sequence is MSDQLERLDRLPLRTNLRGLSPYGAPQLDVPILLNVNENTHGVPADVQAAITEAVAAAATGLNRYPDREFTELREALAEYLGHGLSPDNIWAANGSNEVLQQILQAFGGPGRKALGFPPTYSMYPLLASGTDTEYVRGVRADDYGLDAQSAAAQVRETGANIVFLCSPNNPTGTGLSLDVVEAVYEAGEASQAIVIVDEAYHEFAHDNTPSALTLLPGRERLIVSRTMSKAFALAGARLGYMAAAPEVTDAIRLVRLPYHLSAVTQATALAALNHREALMADVEDIKVQRDRIVTELLRMGLKPAASDSNYVFFGGLEDPHTIWQGLLDAGVLIRDVGIPGHLRVTAGTEPETTAFLEALEALLDGTAPHRA.

Lysine 230 carries the post-translational modification N6-(pyridoxal phosphate)lysine.

This sequence belongs to the class-II pyridoxal-phosphate-dependent aminotransferase family. Histidinol-phosphate aminotransferase subfamily. Homodimer. Requires pyridoxal 5'-phosphate as cofactor.

The catalysed reaction is L-histidinol phosphate + 2-oxoglutarate = 3-(imidazol-4-yl)-2-oxopropyl phosphate + L-glutamate. The protein operates within amino-acid biosynthesis; L-histidine biosynthesis; L-histidine from 5-phospho-alpha-D-ribose 1-diphosphate: step 7/9. The sequence is that of Histidinol-phosphate aminotransferase from Paenarthrobacter aurescens (strain TC1).